The primary structure comprises 135 residues: Large ribosomal subunit protein uL16c (135 aa).

It belongs to the universal ribosomal protein uL16 family. Part of the 50S ribosomal subunit.

It localises to the plastid. The protein resides in the chloroplast. The chain is Large ribosomal subunit protein uL16c from Drimys granadensis.